Here is a 187-residue protein sequence, read N- to C-terminus: GTP cyclohydrolase 1 1 (187 aa).

The protein belongs to the GTP cyclohydrolase I family. Homomer.

The enzyme catalyses GTP + H2O = 7,8-dihydroneopterin 3'-triphosphate + formate + H(+). The protein operates within cofactor biosynthesis; 7,8-dihydroneopterin triphosphate biosynthesis; 7,8-dihydroneopterin triphosphate from GTP: step 1/1. In Pseudomonas syringae pv. tomato (strain ATCC BAA-871 / DC3000), this protein is GTP cyclohydrolase 1 1.